The sequence spans 550 residues: CTP synthase (550 aa).

Residues 1-267 (MKTKFIFITG…DQKIAIMLRL (267 aa)) are amidoligase domain. Ser-14 contacts CTP. UTP is bound at residue Ser-14. ATP-binding positions include 15–20 (SLGKGL) and Asp-72. Asp-72 and Glu-141 together coordinate Mg(2+). CTP contacts are provided by residues 148–150 (DIE), 188–193 (KTKPTQ), and Lys-224. UTP is bound by residues 188-193 (KTKPTQ) and Lys-224. Residues 292–545 (TIGIVGKYVD…IKAAKKEAMG (254 aa)) enclose the Glutamine amidotransferase type-1 domain. An L-glutamine-binding site is contributed by Gly-354. Cys-381 serves as the catalytic Nucleophile; for glutamine hydrolysis. Residues 382–385 (LGMQ), Glu-405, and Arg-473 contribute to the L-glutamine site. Active-site residues include His-518 and Glu-520.

This sequence belongs to the CTP synthase family. Homotetramer.

It catalyses the reaction UTP + L-glutamine + ATP + H2O = CTP + L-glutamate + ADP + phosphate + 2 H(+). It carries out the reaction L-glutamine + H2O = L-glutamate + NH4(+). The enzyme catalyses UTP + NH4(+) + ATP = CTP + ADP + phosphate + 2 H(+). It functions in the pathway pyrimidine metabolism; CTP biosynthesis via de novo pathway; CTP from UDP: step 2/2. Allosterically activated by GTP, when glutamine is the substrate; GTP has no effect on the reaction when ammonia is the substrate. The allosteric effector GTP functions by stabilizing the protein conformation that binds the tetrahedral intermediate(s) formed during glutamine hydrolysis. Inhibited by the product CTP, via allosteric rather than competitive inhibition. In terms of biological role, catalyzes the ATP-dependent amination of UTP to CTP with either L-glutamine or ammonia as the source of nitrogen. Regulates intracellular CTP levels through interactions with the four ribonucleotide triphosphates. The polypeptide is CTP synthase (Nitratidesulfovibrio vulgaris (strain DSM 19637 / Miyazaki F) (Desulfovibrio vulgaris)).